We begin with the raw amino-acid sequence, 708 residues long: Leukotoxin translocation ATP-binding protein LktB (708 aa).

The region spanning 1-126 is the Peptidase C39 domain; the sequence is MEANHQRNDL…ACYQGQLILV (126 aa). In terms of domain architecture, ABC transmembrane type-1 spans 155-437; the sequence is FLETLIVSIF…LAQLWQDFQQ (283 aa). The next 5 membrane-spanning stretches (helical) occupy residues 159–179, 192–212, 270–290, 296–316, and 389–409; these read LIVSIFLQIFALITPLFFQVV, LNIITVALAIVIIFEIVLSGL, ALTSVLDLLFSFIFFAVMWYY, LVILGSLPFYILWSIFISPIL, and VMVINLWLGAHLVISGDLSIG. An ABC transporter domain is found at 469 to 704; sequence ISFKNIRFRY…SNGLYSYLHQ (236 aa). 503 to 510 contacts ATP; it reads GRSGSGKS.

This sequence belongs to the ABC transporter superfamily. Protein-1 exporter (TC 3.A.1.109) family. Homodimer.

It localises to the cell inner membrane. The catalysed reaction is ATP + H2O + proteinSide 1 = ADP + phosphate + proteinSide 2.. In terms of biological role, part of the ABC transporter complex LktBD involved in leukotoxin export. Transmembrane domains (TMD) form a pore in the inner membrane and the ATP-binding domain (NBD) is responsible for energy generation. This is Leukotoxin translocation ATP-binding protein LktB (lktB) from Bibersteinia trehalosi (Pasteurella trehalosi).